A 240-amino-acid chain; its full sequence is Ubiquinone biosynthesis O-methyltransferase (240 aa).

The S-adenosyl-L-methionine site is built by arginine 44, glycine 64, aspartate 85, and methionine 129.

Belongs to the methyltransferase superfamily. UbiG/COQ3 family.

The catalysed reaction is a 3-demethylubiquinol + S-adenosyl-L-methionine = a ubiquinol + S-adenosyl-L-homocysteine + H(+). It catalyses the reaction a 3-(all-trans-polyprenyl)benzene-1,2-diol + S-adenosyl-L-methionine = a 2-methoxy-6-(all-trans-polyprenyl)phenol + S-adenosyl-L-homocysteine + H(+). It functions in the pathway cofactor biosynthesis; ubiquinone biosynthesis. Functionally, O-methyltransferase that catalyzes the 2 O-methylation steps in the ubiquinone biosynthetic pathway. This chain is Ubiquinone biosynthesis O-methyltransferase, found in Escherichia coli O157:H7.